Reading from the N-terminus, the 372-residue chain is 4-hydroxy-3-methylbut-2-en-1-yl diphosphate synthase (flavodoxin) (372 aa).

Positions 270, 273, 305, and 312 each coordinate [4Fe-4S] cluster.

The protein belongs to the IspG family. [4Fe-4S] cluster serves as cofactor.

It carries out the reaction (2E)-4-hydroxy-3-methylbut-2-enyl diphosphate + oxidized [flavodoxin] + H2O + 2 H(+) = 2-C-methyl-D-erythritol 2,4-cyclic diphosphate + reduced [flavodoxin]. Its pathway is isoprenoid biosynthesis; isopentenyl diphosphate biosynthesis via DXP pathway; isopentenyl diphosphate from 1-deoxy-D-xylulose 5-phosphate: step 5/6. Its function is as follows. Converts 2C-methyl-D-erythritol 2,4-cyclodiphosphate (ME-2,4cPP) into 1-hydroxy-2-methyl-2-(E)-butenyl 4-diphosphate. The chain is 4-hydroxy-3-methylbut-2-en-1-yl diphosphate synthase (flavodoxin) from Salmonella typhi.